Consider the following 1067-residue polypeptide: Glycine--tRNA ligase, chloroplastic/mitochondrial 2 (1067 aa).

The transit peptide at 1–50 (MAILHFSLPLIVSFLRPHASPRFFLLPRSLSQSPFLSRRRFHRTSAVSSA) directs the protein to the chloroplast and mitochondrion. Glu-513 is a substrate binding site. ATP-binding positions include 589–596 (RNSGINIE), 619–624 (LVVPQN), 744–745 (RL), and 859–862 (GLRR). A substrate-binding site is contributed by 624 to 628 (NLLNE). 855–859 (NDPFG) contacts substrate.

It belongs to the class-II aminoacyl-tRNA synthetase family. In terms of assembly, homodimer.

Its subcellular location is the plastid. The protein resides in the chloroplast. It is found in the mitochondrion. The enzyme catalyses tRNA(Gly) + glycine + ATP = glycyl-tRNA(Gly) + AMP + diphosphate. Its function is as follows. Catalyzes the attachment of glycine to tRNA(Gly). Is also able produce diadenosine tetraphosphate (Ap4A), a universal pleiotropic signaling molecule needed for cell regulation pathways, by direct condensation of 2 ATPs. The sequence is that of Glycine--tRNA ligase, chloroplastic/mitochondrial 2 from Arabidopsis thaliana (Mouse-ear cress).